The chain runs to 692 residues: MNKKRDSELAKLRKLLEDVHIESEETAHHLRQKHQAAIQEMQDQLDQLQKAKNKSDKEKQKFQAEVFELLAQLETANKEKLTALKNVEKLEYTVHELNIKIEEINRTVIELTSHKQRLSQENTELIKEVHEVKLQLDNANHLKTQIAQQLEDTRHRLEEEERKRASLENHAHTLEVELESLKVQLDEESEARLELERQLTKANGDAASWKSKYEAELQAHADEVEELRRKMAQKISEYEEQLEALLNKCSSLEKQKSRLQSEVEVLIMDLEKATRHAQQLEKRVAQLEKINLDLKNKLEEVTMLMEQAQKELRVKIAELQKLQHEYEKLRDQRDQLARENKKLTDDLAEAKSQLNDAHRRIHEQEIEIKRLENERDELSAAYKEAETLRKQEEAKNQRLIAELAQVRHDYEKRLAQKDEEIEALRKQYQIEIEQLNMRLAEAEAKLKTEIARLKKKYQAQITELELSLDAANKANIDLQKTIKKQALQITELQAHYDEVHRQLQQAVDQLGVTQRRCQALQAELEEMRIALEQANRAKRQAEQLHEEAVVRVNELTTINVNLASAKSKLESEFSALQADYDEVHKELRISDERVQKLTIELKSTKDLLIEEQERLVKLETVKKSLEQEVRTLHVRIEEVEANALAGGKRVIAKLESRIRDVEIEVEEERRRHAETDKMLRKKDHRVKELLLQ.

Residues 1 to 15 (MNKKRDSELAKLRKL) are nonhelical region. The stretch at 16 to 692 (LEDVHIESEE…DHRVKELLLQ (677 aa)) forms a coiled coil. The disordered stretch occupies residues 26–57 (TAHHLRQKHQAAIQEMQDQLDQLQKAKNKSDK).

This sequence belongs to the paramyosin family. In terms of assembly, homodimer.

Its subcellular location is the cytoplasm. The protein resides in the myofibril. Functionally, paramyosin is a major structural component of many thick filaments isolated from invertebrate muscles. The chain is Paramyosin from Dermatophagoides farinae (American house dust mite).